Reading from the N-terminus, the 127-residue chain is Large-conductance mechanosensitive channel (127 aa).

The next 3 helical transmembrane spans lie at valine 19–isoleucine 39, leucine 42–alanine 62, and glycine 67–isoleucine 87.

The protein belongs to the MscL family. Homopentamer.

Its subcellular location is the cell membrane. Functionally, channel that opens in response to stretch forces in the membrane lipid bilayer. May participate in the regulation of osmotic pressure changes within the cell. In Levilactobacillus brevis (strain ATCC 367 / BCRC 12310 / CIP 105137 / JCM 1170 / LMG 11437 / NCIMB 947 / NCTC 947) (Lactobacillus brevis), this protein is Large-conductance mechanosensitive channel.